Consider the following 90-residue polypeptide: Large ribosomal subunit protein bL31 (90 aa).

The disordered stretch occupies residues 65 to 90; the sequence is YSKQEGSGSKSNKSKSTKSKKGKGKK. Residues 76-90 are compositionally biased toward basic residues; sequence NKSKSTKSKKGKGKK.

Belongs to the bacterial ribosomal protein bL31 family. Type A subfamily. As to quaternary structure, part of the 50S ribosomal subunit.

Functionally, binds the 23S rRNA. This is Large ribosomal subunit protein bL31 from Trichodesmium erythraeum (strain IMS101).